The chain runs to 122 residues: Large ribosomal subunit protein bL12 (122 aa).

This sequence belongs to the bacterial ribosomal protein bL12 family. As to quaternary structure, homodimer. Part of the ribosomal stalk of the 50S ribosomal subunit. Forms a multimeric L10(L12)X complex, where L10 forms an elongated spine to which 2 to 4 L12 dimers bind in a sequential fashion. Binds GTP-bound translation factors.

Functionally, forms part of the ribosomal stalk which helps the ribosome interact with GTP-bound translation factors. Is thus essential for accurate translation. This chain is Large ribosomal subunit protein bL12, found in Yersinia enterocolitica serotype O:8 / biotype 1B (strain NCTC 13174 / 8081).